We begin with the raw amino-acid sequence, 333 residues long: Torsin-1A (333 aa).

Positions 1–20 (MKLGRAALALLLLAPCVVRA) are cleaved as a signal peptide. An interaction with SNAPIN region spans residues 92 to 252 (KPKKPLTLSL…VSVFNNKNSG (161 aa)). Residue 103-110 (GWTGTGKN) coordinates ATP. 2 N-linked (GlcNAc...) asparagine glycosylation sites follow: asparagine 144 and asparagine 159. The segment at 252–333 (GFWHSSLIDR…FTKLDYYLDD (82 aa)) is interaction with KLC1. The segment at 313–333 (KVFSDKGCKTVFTKLDYYLDD) is interaction with SYNE3.

The protein belongs to the ClpA/ClpB family. Torsin subfamily. Homohexamer. Interacts with TOR1B; the interaction may be specific of neural tissues. Interacts (ATP-bound) with TOR1AIP1 and TOR1AIP2; the interactions induce ATPase activity. Interacts with KLHL14; preferentially when ATP-free. Interacts with KLC1 (via TPR repeats); the interaction associates TOR1A with the kinesin oligomeric complex. Interacts with COPS4; the interaction associates TOR1A with the CSN complex. Interacts with SNAPIN; the interaction is direct and associates SNAPIN with the CSN complex. Interacts with STON2. Interacts (ATP-bound) with SYNE3 (via KASH domain); the interaction is required for SYNE3 nuclear envelope localization. Interacts with VIM; the interaction associates TOR1A with the cytoskeleton. Interacts with PLEC. Interacts (ATP-bound) with SLC6A3; regulates SLC6A3 transport to the plasma membrane. Post-translationally, N-glycosylated. As to expression, widely expressed (at protein level).

The protein resides in the endoplasmic reticulum lumen. It localises to the nucleus membrane. The protein localises to the cell projection. It is found in the growth cone. Its subcellular location is the cytoplasmic vesicle membrane. The protein resides in the synapse. It localises to the synaptosome. The protein localises to the cytoplasm. It is found in the cytoskeleton. Its subcellular location is the cytoplasmic vesicle. The protein resides in the secretory vesicle. It localises to the synaptic vesicle. It catalyses the reaction ATP + H2O = ADP + phosphate + H(+). Functionally, protein with chaperone functions important for the control of protein folding, processing, stability and localization as well as for the reduction of misfolded protein aggregates. Involved in the regulation of synaptic vesicle recycling, controls STON2 protein stability in collaboration with the COP9 signalosome complex (CSN). In the nucleus, may link the cytoskeleton with the nuclear envelope, this mechanism seems to be crucial for the control of nuclear polarity, cell movement and, specifically in neurons, nuclear envelope integrity. Participates in the cellular trafficking and may regulate the subcellular location of multipass membrane proteins such as the dopamine transporter SLC6A3, leading to the modulation of dopamine neurotransmission. In the endoplasmic reticulum, plays a role in the quality control of protein folding by increasing clearance of misfolded proteins such as SGCE variants or holding them in an intermediate state for proper refolding. May have a redundant function with TOR1B in non-neural tissues. This Mus musculus (Mouse) protein is Torsin-1A (Tor1a).